Consider the following 362-residue polypeptide: Heat-inducible transcription repressor HrcA (362 aa).

The protein belongs to the HrcA family.

Its function is as follows. Negative regulator of class I heat shock genes (grpE-dnaK-dnaJ and groELS operons). Prevents heat-shock induction of these operons. The protein is Heat-inducible transcription repressor HrcA of Rhizobium johnstonii (strain DSM 114642 / LMG 32736 / 3841) (Rhizobium leguminosarum bv. viciae).